Consider the following 389-residue polypeptide: MDKIYTVSEVTYYIEALIDQDQYLSDIQVVGEIADLKERNGHLFFYLKDEFTTIGCVFFGGAYRSFGLSDGRIAQVAGQIKVYAPRGQYRLICRQAKILPERGTLFLRMKESYERLVAEGIFDKPKRPLPEYPSKIGLITSRNSAAYQDVLRTISDRYPLVEIFLYHTGVQGEDAKGSLLRALKDVNESDVDVVIITRGGGSRDDLWLFNDEDIVRAVYKLRHPVITGVGHQIDTVFIDLVADYSAHTPTAAAQAAVPNLSEIRMHFLELMQRMNLSIRKKIESFSQQIESSNKSLFQSMMSQILRTHSSIDSMKEKAFALMQRQMFSYEKKLSSAGTKLFSLNPVELLKKGYVIVEKDGKWVKSSSILREKDEISMRFFDGVVKVVVK.

This sequence belongs to the XseA family. In terms of assembly, heterooligomer composed of large and small subunits.

It localises to the cytoplasm. The enzyme catalyses Exonucleolytic cleavage in either 5'- to 3'- or 3'- to 5'-direction to yield nucleoside 5'-phosphates.. Its function is as follows. Bidirectionally degrades single-stranded DNA into large acid-insoluble oligonucleotides, which are then degraded further into small acid-soluble oligonucleotides. The sequence is that of Exodeoxyribonuclease 7 large subunit from Pseudothermotoga lettingae (strain ATCC BAA-301 / DSM 14385 / NBRC 107922 / TMO) (Thermotoga lettingae).